A 256-amino-acid chain; its full sequence is Vesicle-associated protein 1-1 (256 aa).

Position 1 is an N-acetylmethionine (Met-1). Residues 1-232 (MSNIDLIGMS…RRESKKSQSG (232 aa)) are Cytoplasmic-facing. Ser-2 bears the N-acetylserine; in Vesicle-associated protein 1-1, N-terminally processed mark. In terms of domain architecture, MSP spans 22-142 (LLTVEPLDLQ…EETKLRVTYV (121 aa)). The tract at residues 142–169 (VAPPRPPSPVHEGSEEGSSPRASVSDNG) is disordered. Ser-149 is modified (phosphoserine). Polar residues predominate over residues 157-169 (EGSSPRASVSDNG). Residues 187 to 232 (HQENTSEARALITKLTEEKQSAIQLNNRLQRELDQLRRESKKSQSG) are a coiled coil. Residues 233–253 (GIPFMYVLLVGLIGLILGYIM) traverse the membrane as a helical; Anchor for type IV membrane protein segment.

It belongs to the VAMP-associated protein (VAP) (TC 9.B.17) family. Homodimer or homooligomer. Interacts with the cowpea mosaic virus (CPMV) NTP-binding protein (NTB). Interacts with NET3C.

The protein localises to the endoplasmic reticulum membrane. Its subcellular location is the protein storage vacuole membrane. Its function is as follows. Part of a membrane-cytoskeletal adapter complex that forms a bridge between the endoplasmic reticulum and the plasma membrane. Associates with microtubules. The protein is Vesicle-associated protein 1-1 (PVA11) of Arabidopsis thaliana (Mouse-ear cress).